The following is a 198-amino-acid chain: Crinkler effector protein BLC01 (198 aa).

A signal peptide spans 1–15 (MMVKLICAIVDIAGA). The LQLFLAK domain stretch occupies residues 16-55 (AFPIDIDTNELVGDFKKVIKAENSRTIACDANDLRLFLAK). The tract at residues 56-113 (TDGRWLTEFEVQNGVADISVFEELDVVGAPLNMIGLSEETVSSVAITKELVKAKKTPL) is DWL domain. Positions 114–119 (HVLVVP) match the HVLVXXP motif motif.

Belongs to the Crinkler effector family.

The protein resides in the secreted. The protein localises to the host cell. Secreted effector that elicits necrosis in host plants, a characteristic of plant innate immunity. This chain is Crinkler effector protein BLC01, found in Bremia lactucae (Lettuce downy mildew).